Here is a 434-residue protein sequence, read N- to C-terminus: 4-hydroxy-3-methylbut-2-en-1-yl diphosphate synthase (flavodoxin) (434 aa).

Polar residues predominate over residues 1–15 (MQSEAQSPRSSQICS). Residues 1 to 24 (MQSEAQSPRSSQICSTEPVFGGHQ) form a disordered region. Residues Cys-322, Cys-325, Cys-368, and Glu-375 each coordinate [4Fe-4S] cluster.

The protein belongs to the IspG family. The cofactor is [4Fe-4S] cluster.

It carries out the reaction (2E)-4-hydroxy-3-methylbut-2-enyl diphosphate + oxidized [flavodoxin] + H2O + 2 H(+) = 2-C-methyl-D-erythritol 2,4-cyclic diphosphate + reduced [flavodoxin]. It participates in isoprenoid biosynthesis; isopentenyl diphosphate biosynthesis via DXP pathway; isopentenyl diphosphate from 1-deoxy-D-xylulose 5-phosphate: step 5/6. Functionally, converts 2C-methyl-D-erythritol 2,4-cyclodiphosphate (ME-2,4cPP) into 1-hydroxy-2-methyl-2-(E)-butenyl 4-diphosphate. The protein is 4-hydroxy-3-methylbut-2-en-1-yl diphosphate synthase (flavodoxin) of Burkholderia ambifaria (strain MC40-6).